A 106-amino-acid chain; its full sequence is Large ribosomal subunit protein uL24 (106 aa).

Belongs to the universal ribosomal protein uL24 family. As to quaternary structure, part of the 50S ribosomal subunit.

Its function is as follows. One of two assembly initiator proteins, it binds directly to the 5'-end of the 23S rRNA, where it nucleates assembly of the 50S subunit. Functionally, one of the proteins that surrounds the polypeptide exit tunnel on the outside of the subunit. This Thermosipho melanesiensis (strain DSM 12029 / CIP 104789 / BI429) protein is Large ribosomal subunit protein uL24.